The chain runs to 1059 residues: Zinc finger protein 658 (1059 aa).

Residues 8–79 enclose the KRAB domain; sequence VSFQDVTVEF…EDEFLNQRYP (72 aa). A Glycyl lysine isopeptide (Lys-Gly) (interchain with G-Cter in SUMO2) cross-link involves residue K178. The C2H2-type 1; degenerate zinc-finger motif lies at 325-347; it reads FESNKCEENFSQSSAHIVHQKTQ. The C2H2-type 2; degenerate zinc finger occupies 352–375; sequence FGEHNECTDALYQKLDFTAHQRIH. A C2H2-type 3; degenerate zinc finger spans residues 381 to 406; it reads YLSDEHGKCRKSFYRKAHLIQHQRPH. Residues 412-434 form a C2H2-type 4; degenerate zinc finger; it reads YQYEECAKSFCSSSHPIQHPGTY. C2H2-type zinc fingers lie at residues 440–462, 518–540, 546–568, 574–596, 602–624, 630–652, 658–680, 686–708, 714–736, 742–764, 770–792, 798–820, 826–848, and 854–876; these read YECN…LRIH, YECI…QRIH, YECV…QRVH, YECN…QRIH, YECS…HRIH, YECS…QRIH, YECN…QNIH, YECS…RRIH, YECS…ERIH, and YECN…HRIH. The C2H2-type 19; degenerate zinc finger occupies 882–904; it reads YECNDCGKTFSKTSHLRAHLRTR. 5 consecutive C2H2-type zinc fingers follow at residues 910–932, 938–960, 966–988, 994–1016, and 1022–1045; these read YECS…QRVH, YECN…QRIH, and YECD…TRMH.

This sequence belongs to the krueppel C2H2-type zinc-finger protein family.

The protein localises to the nucleus. In terms of biological role, mediates transcriptional repression in response to zinc. Represses several genes, including SLC30A5, SLC30A10 and CBWD1, by binding to the zinc transcriptional regulatory element (ZTRE) (5'-C[AC]C[TAG]CC[TC]-N(0-50)-[GA]G[ATC]G[TG]G-3') found in the promoter region. May play a role in the control of ribosome biogenesis, regulating predominantly rRNA levels, as well as those of several ribosomal proteins, thus coordinating this highly zinc-demanding process with the available zinc supply. This is Zinc finger protein 658 (ZNF658) from Homo sapiens (Human).